The following is a 184-amino-acid chain: MKPGKRVPLARPNRINKEIRVTEVRLTGIEGEQIGIVSIAVALQKAEEAGVDLVEISPNADPPVCRVMDYGKFLYEKSKSIKDQKKKQRVIQVKEVKFRPGTDEGDYQVKLRSLTRFLEEGDKAKITLRFRGREMAHQQIGMAMLERIRRDLCESENSIALVESFPARIEGRQISMVLAPKKKQ.

It belongs to the IF-3 family. Monomer.

It is found in the cytoplasm. Functionally, IF-3 binds to the 30S ribosomal subunit and shifts the equilibrium between 70S ribosomes and their 50S and 30S subunits in favor of the free subunits, thus enhancing the availability of 30S subunits on which protein synthesis initiation begins. The protein is Translation initiation factor IF-3 of Hamiltonella defensa subsp. Acyrthosiphon pisum (strain 5AT).